A 380-amino-acid chain; its full sequence is Cytochrome b (380 aa).

4 helical membrane passes run 34 to 54 (FGSLLGICLATQILTGLLLAA), 78 to 99 (WLIRNLHANGASFFFICIYLHI), 114 to 134 (WNTGVILLLTLMATAFVGYVL), and 179 to 199 (FFTLHFLLPFMIMGLTLIHLT). The heme b site is built by histidine 84 and histidine 98. Residues histidine 183 and histidine 197 each coordinate heme b. Histidine 202 is a binding site for a ubiquinone. The next 4 helical transmembrane spans lie at 227-247 (LKDTLGFMFMLLPLMTLALFS), 289-309 (LGGVLALAASVLILFLAPLLH), 321-341 (LFQLLFWTLTANLLILTWVGS), and 348-368 (FIIIGQLASLTYFTILLILFP).

The protein belongs to the cytochrome b family. As to quaternary structure, the cytochrome bc1 complex contains 11 subunits: 3 respiratory subunits (MT-CYB, CYC1 and UQCRFS1), 2 core proteins (UQCRC1 and UQCRC2) and 6 low-molecular weight proteins (UQCRH/QCR6, UQCRB/QCR7, UQCRQ/QCR8, UQCR10/QCR9, UQCR11/QCR10 and a cleavage product of UQCRFS1). This cytochrome bc1 complex then forms a dimer. Requires heme b as cofactor.

It is found in the mitochondrion inner membrane. Its function is as follows. Component of the ubiquinol-cytochrome c reductase complex (complex III or cytochrome b-c1 complex) that is part of the mitochondrial respiratory chain. The b-c1 complex mediates electron transfer from ubiquinol to cytochrome c. Contributes to the generation of a proton gradient across the mitochondrial membrane that is then used for ATP synthesis. This chain is Cytochrome b (MT-CYB), found in Grus nigricollis (Black-necked crane).